We begin with the raw amino-acid sequence, 247 residues long: Probable transcriptional regulatory protein Tola_2714 (247 aa).

A disordered region spans residues 1–21 (MAGHSKWANIKHRKAAQDAKR).

The protein belongs to the TACO1 family.

The protein localises to the cytoplasm. The protein is Probable transcriptional regulatory protein Tola_2714 of Tolumonas auensis (strain DSM 9187 / NBRC 110442 / TA 4).